Here is a 316-residue protein sequence, read N- to C-terminus: 2,3-dihydroxyphenylpropionate/2,3-dihydroxicinnamic acid 1,2-dioxygenase (316 aa).

Catalysis depends on histidine 118, which acts as the Proton donor. The active-site Proton acceptor is the histidine 182.

It belongs to the LigB/MhpB extradiol dioxygenase family. As to quaternary structure, homotetramer. Requires Fe(2+) as cofactor.

The catalysed reaction is 3-(2,3-dihydroxyphenyl)propanoate + O2 = (2Z,4E)-2-hydroxy-6-oxonona-2,4-dienedioate + H(+). It catalyses the reaction (2E)-3-(2,3-dihydroxyphenyl)prop-2-enoate + O2 = (2Z,4E,7E)-2-hydroxy-6-oxonona-2,4,7-trienedioate + H(+). The protein operates within aromatic compound metabolism; 3-phenylpropanoate degradation. Catalyzes the non-heme iron(II)-dependent oxidative cleavage of 2,3-dihydroxyphenylpropionic acid and 2,3-dihydroxicinnamic acid into 2-hydroxy-6-ketononadienedioate and 2-hydroxy-6-ketononatrienedioate, respectively. This is 2,3-dihydroxyphenylpropionate/2,3-dihydroxicinnamic acid 1,2-dioxygenase from Mycolicibacterium vanbaalenii (strain DSM 7251 / JCM 13017 / BCRC 16820 / KCTC 9966 / NRRL B-24157 / PYR-1) (Mycobacterium vanbaalenii).